The sequence spans 91 residues: UPF0335 protein BBta_6866 (91 aa).

Belongs to the UPF0335 family.

The sequence is that of UPF0335 protein BBta_6866 from Bradyrhizobium sp. (strain BTAi1 / ATCC BAA-1182).